The sequence spans 624 residues: MPIQVLPPQLANQIAAGEVVERPASVVKELVENSLDAGATRIDIDIERGGAKLIRIRDNGSGIGKDDLALALARHATSKISTLDDLEAIVSLGFRGEALASISSVSRLTLTSRTAEQNEAWQAYAEGRDQAVTVKPAAHPIGSTLEVLDLFYNTPARRKFMRTEKTEFGHIDEVVRRIALARFDVAINLSHNGKLMRQYRAAKDESQYERRLGSICGPAFLQHALNISWQHGDLTIRGWVADPAGARQLGEMQYCYVNSRMMRDRLINHAIRQAYQDQLKDDQQPAYVLYLEVDPHQVDVNVHPAKHEVRFHQARLVHDFIYQAVTTVLQQVGNAPLPLTDETEQQPTPVWQPENRVAAGGNHFSQPAPRRETASTEPAVARERAPQPAYHSGSGYQKREGELYGKLLQATPVAEPRQEAPKQPLFPPVKTEQETPLAGSQHSFGRVLMIYPPCYALIENGQQLMLLNLPVAERWLRQAQLNPSQEGLRPQPLLIPIKLTLNKQEAAACIHHQPLLVTMGLDLQVDHGRVTLRAVPLPLRQQNLQKLIPELLGYLAEHQEMSPAVLATWFARHLGSEHEQWNTSQAIQLLTDVERLCPQLVKSPPSGLLQPVDLQAALTALRHD.

The tract at residues 360 to 396 (GGNHFSQPAPRRETASTEPAVARERAPQPAYHSGSGY) is disordered. Residues 369–385 (PRRETASTEPAVARERA) show a composition bias toward basic and acidic residues.

Belongs to the DNA mismatch repair MutL/HexB family.

This protein is involved in the repair of mismatches in DNA. It is required for dam-dependent methyl-directed DNA mismatch repair. May act as a 'molecular matchmaker', a protein that promotes the formation of a stable complex between two or more DNA-binding proteins in an ATP-dependent manner without itself being part of a final effector complex. In Serratia proteamaculans (strain 568), this protein is DNA mismatch repair protein MutL.